Here is a 511-residue protein sequence, read N- to C-terminus: Synaptotagmin-6 (511 aa).

The Vesicular portion of the chain corresponds to Met-1–Ser-59. Residues Cys-12–Arg-38 form a cysteine motif region. Residues Leu-60–Phe-80 traverse the membrane as a helical segment. The Cytoplasmic portion of the chain corresponds to Trp-81–Leu-511. 2 disordered regions span residues Glu-92 to Leu-119 and Thr-157 to Gln-182. Positions Ser-94–Ser-103 are enriched in low complexity. Polar residues-rich tracts occupy residues Glu-104–Gly-113 and Gln-160–His-172. Position 217 is a phosphoserine (Ser-217). C2 domains follow at residues Ser-230 to Lys-351 and Asp-362 to His-495. Residues Asp-261, Asp-267, Asp-319, Phe-320, Asp-321, Ser-324, Asp-327, Asp-393, Asp-399, Asp-453, and Asp-455 each coordinate Ca(2+). Positions Met-483 to Leu-511 are necessary for cell membrane association (isoform 2).

Belongs to the synaptotagmin family. In terms of assembly, isoform 1: Homodimer; disulfide-linked via the cysteine motif. Isoform 1: Can also form heterodimers with SYT3, SYT7, SYT9 and SYT10. Isoform 1: Interacts with STX1A, STX1B and STX2; the interaction is Ca(2+)-dependent. Isoform 2: Is not able to form homodimer and heterodimers. Ca(2+) is required as a cofactor. As to expression, isoform 1 is expressed in the olfactory bulb. Isoform 2 is expressed in the brain (at protein level).

The protein localises to the cytoplasmic vesicle. The protein resides in the secretory vesicle. It localises to the synaptic vesicle membrane. Its subcellular location is the membrane. It is found in the cytoplasm. The protein localises to the cytosol. The protein resides in the cell membrane. Functionally, may be involved in Ca(2+)-dependent exocytosis of secretory vesicles through Ca(2+) and phospholipid binding to the C2 domain or may serve as Ca(2+) sensors in the process of vesicular trafficking and exocytosis. May mediate Ca(2+)-regulation of exocytosis in acrosomal reaction in sperm. In Mus musculus (Mouse), this protein is Synaptotagmin-6 (Syt6).